The chain runs to 92 residues: Co-chaperonin GroES (92 aa).

The protein belongs to the GroES chaperonin family. As to quaternary structure, heptamer of 7 subunits arranged in a ring. Interacts with the chaperonin GroEL.

It is found in the cytoplasm. Functionally, together with the chaperonin GroEL, plays an essential role in assisting protein folding. The GroEL-GroES system forms a nano-cage that allows encapsulation of the non-native substrate proteins and provides a physical environment optimized to promote and accelerate protein folding. GroES binds to the apical surface of the GroEL ring, thereby capping the opening of the GroEL channel. This chain is Co-chaperonin GroES, found in Methanosarcina mazei (strain ATCC BAA-159 / DSM 3647 / Goe1 / Go1 / JCM 11833 / OCM 88) (Methanosarcina frisia).